Consider the following 472-residue polypeptide: Serine incorporator 3 (472 aa).

Topologically, residues 1-95 are extracellular; that stretch reads MGAVLGVFSL…KECDVLVRYK (95 aa). N-linked (GlcNAc...) asparagine glycosylation is present at asparagine 34. Residues 96–116 form a helical membrane-spanning segment; that stretch reads AVYRISFALAVFFFAFSLLML. Over 117–131 the chain is Cytoplasmic; that stretch reads NVKTSKDPRAAIHNG. A helical membrane pass occupies residues 132–152; sequence FWFFKIAAIVGVMVGSFYIPG. The Extracellular segment spans residues 153-158; sequence GHFNTA. Residues 159-179 form a helical membrane-spanning segment; sequence WFVIGMVGAAFFILIQLVLLV. The Cytoplasmic segment spans residues 180–202; sequence DFAHSWNESWVNRMEEGNPKCWY. The helical transmembrane segment at 203-223 threads the bilayer; sequence AALLSVTSLFYILSIIFAGLL. Over 224-238 the chain is Extracellular; sequence YTYYTKPDGCTENKF. Residues 239–259 form a helical membrane-spanning segment; it reads FISFNLILCVVISVLSIHPKI. Residues 260–328 are Cytoplasmic-facing; sequence QEHQPRSGLL…APTPAVPLQS (69 aa). The helical transmembrane segment at 329–349 threads the bilayer; the sequence is GPSLNKENFIGLLVFVLSLSY. The Extracellular portion of the chain corresponds to 350–405; it reads SSIRNSSNSQVSKLTLSGSDSVILRDTAANGASDEEDGRPRRAVDNEREGVQYNYS. A glycan (N-linked (GlcNAc...) asparagine) is linked at asparagine 354. Position 370 is a phosphoserine (serine 370). An N-linked (GlcNAc...) asparagine glycan is attached at asparagine 403. A helical transmembrane segment spans residues 406-426; the sequence is MFHLMLCSASLYIMMTLTNWY. Topologically, residues 427–445 are cytoplasmic; the sequence is SPDANFQSMTSKWPAVWVK. A helical membrane pass occupies residues 446–466; that stretch reads ISSSWVCLLLYVWTLVAPLVL. Residues 467–472 lie on the Extracellular side of the membrane; that stretch reads TNRDFS.

This sequence belongs to the TDE1 family. Post-translationally, N-glycosylated.

Its subcellular location is the cell membrane. The protein localises to the golgi apparatus membrane. It catalyses the reaction a 1,2-diacyl-sn-glycero-3-phospho-L-serine(in) = a 1,2-diacyl-sn-glycero-3-phospho-L-serine(out). The catalysed reaction is a 1,2-diacyl-sn-glycero-3-phosphocholine(in) = a 1,2-diacyl-sn-glycero-3-phosphocholine(out). It carries out the reaction a 1,2-diacyl-sn-glycero-3-phosphoethanolamine(in) = a 1,2-diacyl-sn-glycero-3-phosphoethanolamine(out). Its function is as follows. Restriction factor required to restrict infectivity of gammaretroviruses: acts by inhibiting an early step of viral infection. Impairs the penetration of the viral particle into the cytoplasm. Non-ATP-dependent, non-specific lipid transporter for phosphatidylserine, phosphatidylcholine, and phosphatidylethanolamine. Functions as a scramblase that flips lipids in both directions across the membrane. Phospholipid scrambling results in gammaretroviral surface exposure of phosphatidylserine and loss of membrane asymmetry, which leads to loss of infectivity. The protein is Serine incorporator 3 (SERINC3) of Bos taurus (Bovine).